We begin with the raw amino-acid sequence, 278 residues long: UPF0276 protein Sama_1305 (278 aa).

Belongs to the UPF0276 family.

This Shewanella amazonensis (strain ATCC BAA-1098 / SB2B) protein is UPF0276 protein Sama_1305.